The following is a 355-amino-acid chain: MVNLGKDTYPVYIGSNLLEISNIFFPIESNTQVAIITNDVVFKIWNKKITYYLHKLGAQVKNVIISDGEIYKNIDTVEIILSTLLKYSYCRDAVLIALGGGVIGDITGFVASIYQRGIKFVQIPTTLLAQVDASIGGKTSVNHVLGKNMIGSFWQPSSVIINFDFLNTLPRRQLISGIAEIVKYAVSFDVNFFNWLEENLERVLKLDYSALSYCINRCCEIKISIVEKDEKEIHDRMLLNLGHTYGHAIETFLGYGTWLHGEAVSVGIVMASKTSELLGFMKDNDITRIISLLQRVGLPISGPKNMSFESYISNFKRDKKVISGKLRMVLPVFIGNVKIFSNVHENILMSVIKNC.

Residues aspartate 67–lysine 72, glycine 101–aspartate 105, threonine 125–threonine 126, lysine 138, lysine 147, and phenylalanine 165–threonine 168 contribute to the NAD(+) site. Residues glutamate 180, histidine 243, and histidine 260 each contribute to the Zn(2+) site.

This sequence belongs to the sugar phosphate cyclases superfamily. Dehydroquinate synthase family. The cofactor is NAD(+). It depends on Co(2+) as a cofactor. Zn(2+) is required as a cofactor.

It is found in the cytoplasm. The catalysed reaction is 7-phospho-2-dehydro-3-deoxy-D-arabino-heptonate = 3-dehydroquinate + phosphate. It functions in the pathway metabolic intermediate biosynthesis; chorismate biosynthesis; chorismate from D-erythrose 4-phosphate and phosphoenolpyruvate: step 2/7. In terms of biological role, catalyzes the conversion of 3-deoxy-D-arabino-heptulosonate 7-phosphate (DAHP) to dehydroquinate (DHQ). In Buchnera aphidicola subsp. Baizongia pistaciae (strain Bp), this protein is 3-dehydroquinate synthase.